The primary structure comprises 78 residues: RNA-binding protein Hfq (78 aa).

Residues aspartate 10–valine 69 form the Sm domain.

The protein belongs to the Hfq family. In terms of assembly, homohexamer.

Its function is as follows. RNA chaperone that binds small regulatory RNA (sRNAs) and mRNAs to facilitate mRNA translational regulation in response to envelope stress, environmental stress and changes in metabolite concentrations. Also binds with high specificity to tRNAs. The sequence is that of RNA-binding protein Hfq from Bordetella avium (strain 197N).